Here is a 556-residue protein sequence, read N- to C-terminus: Zinc finger protein 18 (556 aa).

The SCAN box domain maps to 41 to 123 (RQLFRQFRYQ…TLVESLKGEP (83 aa)). The tract at residues 169–195 (QDLPLQNSSSATGELLSHGVKEESDME) is disordered. Residues 218 to 291 (ELGTAVLPPL…HLHGAEKMAR (74 aa)) enclose the KRAB domain. C2H2-type zinc fingers lie at residues 415–437 (PTCR…QRTH), 443–465 (FHCH…QRTH), 471–493 (CKCD…EKIH), 499–521 (YKCP…QRVH), and 527–549 (YKCT…QRSH).

Belongs to the krueppel C2H2-type zinc-finger protein family.

The protein localises to the nucleus. In terms of biological role, may be involved in transcriptional regulation. The sequence is that of Zinc finger protein 18 (Znf18) from Mus musculus (Mouse).